The following is a 362-amino-acid chain: Porin Omp2b (362 aa).

Positions 1 to 22 (MNIKSLLLGSAAALVAASGAQA) are cleaved as a signal peptide.

The protein belongs to the alphaproteobacteria porin family. Homotrimer.

It localises to the cell outer membrane. Forms passive diffusion pores that allow small molecular weight hydrophilic materials across the outer membrane. The sequence is that of Porin Omp2b (omp2b) from Brucella suis biovar 1 (strain 1330).